Consider the following 70-residue polypeptide: Large ribosomal subunit protein eL38 (70 aa).

Residue Lys-4 forms a Glycyl lysine isopeptide (Lys-Gly) (interchain with G-Cter in SUMO2) linkage. Position 9 is an N6-acetyllysine; alternate (Lys-9). Residue Lys-9 forms a Glycyl lysine isopeptide (Lys-Gly) (interchain with G-Cter in SUMO2); alternate linkage. Residue Lys-67 is modified to N6-acetyllysine.

Belongs to the eukaryotic ribosomal protein eL38 family. As to quaternary structure, component of the large ribosomal subunit.

The protein localises to the cytoplasm. Functionally, component of the large ribosomal subunit. The ribosome is a large ribonucleoprotein complex responsible for the synthesis of proteins in the cell. This Homo sapiens (Human) protein is Large ribosomal subunit protein eL38 (RPL38).